The chain runs to 512 residues: Opioid growth factor receptor-like protein 1 (512 aa).

Disordered stretches follow at residues 1 to 72 (MGNI…ETGT), 323 to 469 (IWGP…TCCK), and 488 to 512 (SLSPGTSNSNVTELKVEGSETGPFT). 2 stretches are compositionally biased toward acidic residues: residues 28–54 (GGEEEQQEAEEEEESEGTEQREDDNEE) and 62–71 (TNEGGEEETG). Residues 328 to 337 (DKQKADENKA) are compositionally biased toward basic and acidic residues. Over residues 347 to 361 (QKKHSHVEKKSRPAK) the composition is skewed to basic residues. Over residues 408-421 (TVTSENNSSKTGQT) the composition is skewed to polar residues. A compositionally biased stretch (basic and acidic residues) spans 449 to 468 (RSLDTEHDLKRPEADRETCC). Residues 490-499 (SPGTSNSNVT) are compositionally biased toward polar residues.

Belongs to the opioid growth factor receptor family.

This chain is Opioid growth factor receptor-like protein 1 (ogfrl1), found in Xenopus tropicalis (Western clawed frog).